Reading from the N-terminus, the 273-residue chain is 2,3,4,5-tetrahydropyridine-2,6-dicarboxylate N-succinyltransferase (273 aa).

Residues Arg104 and Asp141 each contribute to the substrate site.

It belongs to the transferase hexapeptide repeat family. In terms of assembly, homotrimer.

It localises to the cytoplasm. It catalyses the reaction (S)-2,3,4,5-tetrahydrodipicolinate + succinyl-CoA + H2O = (S)-2-succinylamino-6-oxoheptanedioate + CoA. It functions in the pathway amino-acid biosynthesis; L-lysine biosynthesis via DAP pathway; LL-2,6-diaminopimelate from (S)-tetrahydrodipicolinate (succinylase route): step 1/3. In Neisseria meningitidis serogroup B (strain ATCC BAA-335 / MC58), this protein is 2,3,4,5-tetrahydropyridine-2,6-dicarboxylate N-succinyltransferase.